The chain runs to 156 residues: 6,7-dimethyl-8-ribityllumazine synthase (156 aa).

Residues F23, 57-59, and 81-83 contribute to the 5-amino-6-(D-ribitylamino)uracil site; these read AFE and AVI. A (2S)-2-hydroxy-3-oxobutyl phosphate-binding site is contributed by 86–87; it reads AT. The active-site Proton donor is the H89. A 5-amino-6-(D-ribitylamino)uracil-binding site is contributed by N114. R128 contacts (2S)-2-hydroxy-3-oxobutyl phosphate.

The protein belongs to the DMRL synthase family.

The catalysed reaction is (2S)-2-hydroxy-3-oxobutyl phosphate + 5-amino-6-(D-ribitylamino)uracil = 6,7-dimethyl-8-(1-D-ribityl)lumazine + phosphate + 2 H2O + H(+). The protein operates within cofactor biosynthesis; riboflavin biosynthesis; riboflavin from 2-hydroxy-3-oxobutyl phosphate and 5-amino-6-(D-ribitylamino)uracil: step 1/2. In terms of biological role, catalyzes the formation of 6,7-dimethyl-8-ribityllumazine by condensation of 5-amino-6-(D-ribitylamino)uracil with 3,4-dihydroxy-2-butanone 4-phosphate. This is the penultimate step in the biosynthesis of riboflavin. The protein is 6,7-dimethyl-8-ribityllumazine synthase of Aliarcobacter butzleri (strain RM4018) (Arcobacter butzleri).